A 562-amino-acid polypeptide reads, in one-letter code: MTDKHPRPHSSQVVDGMERAPSRAMLHAVGFADADFAKPQIGIASTWAMVTPCNMHINKLAEDAARGVDGGGGKAVIFNTITISDGISMGTEGMKYSLVSREVIADSIETVVACQGYDGVVAIGGCDKNMPGCLIALARLNRPAVFVYGGTILPGCHDGKKLDVVSVFEAVGARANHRIDDAELHAIESNAIPGPGSCGGMYTANTMASAIEALGMSLPGSSAQVAISRAKELDCERAGAQVLKLLDLGLKPRDIMTKKAFENAITVVIALGGSTNAVLHLLAMANACGVDLKLDDFTRIGRKVPMLADLKPSGRYSMAELVEIGGIQPLMKTLLDAGLLHGDCMTVTGKTLEENLADAPDYPAGQDMIRSLDNPIKKDSHLVILKGNLAPEGAVAKITGKEGLSFTGTARVFDCEEAALTAILDGTIVKGDVIVIRYEGPKGGPGMREMLSPTSAVMGKGLGKEVALITDGRFSGGTHGFVVGHITPEAYTGGPLAIVRDGDTITIDAETRELSLHVTDDEIGRRLAQWTQPAPRYTKGVLAKYARLVSPASEGAVTDDGL.

Cys-53 is a binding site for [2Fe-2S] cluster. Asp-85 lines the Mg(2+) pocket. Cys-126 provides a ligand contact to [2Fe-2S] cluster. The Mg(2+) site is built by Asp-127 and Lys-128. The residue at position 128 (Lys-128) is an N6-carboxylysine. Cys-198 lines the [2Fe-2S] cluster pocket. Glu-449 is a Mg(2+) binding site. The Proton acceptor role is filled by Ser-475.

The protein belongs to the IlvD/Edd family. Homodimer. It depends on [2Fe-2S] cluster as a cofactor. Requires Mg(2+) as cofactor.

It catalyses the reaction (2R)-2,3-dihydroxy-3-methylbutanoate = 3-methyl-2-oxobutanoate + H2O. The catalysed reaction is (2R,3R)-2,3-dihydroxy-3-methylpentanoate = (S)-3-methyl-2-oxopentanoate + H2O. The protein operates within amino-acid biosynthesis; L-isoleucine biosynthesis; L-isoleucine from 2-oxobutanoate: step 3/4. Its pathway is amino-acid biosynthesis; L-valine biosynthesis; L-valine from pyruvate: step 3/4. Its function is as follows. Functions in the biosynthesis of branched-chain amino acids. Catalyzes the dehydration of (2R,3R)-2,3-dihydroxy-3-methylpentanoate (2,3-dihydroxy-3-methylvalerate) into 2-oxo-3-methylpentanoate (2-oxo-3-methylvalerate) and of (2R)-2,3-dihydroxy-3-methylbutanoate (2,3-dihydroxyisovalerate) into 2-oxo-3-methylbutanoate (2-oxoisovalerate), the penultimate precursor to L-isoleucine and L-valine, respectively. The protein is Dihydroxy-acid dehydratase of Methylococcus capsulatus (strain ATCC 33009 / NCIMB 11132 / Bath).